A 333-amino-acid polypeptide reads, in one-letter code: SPbeta prophage-derived recombinase-like protein YomM (333 aa).

Residues 30–113 (EEHRNLVQEF…GVSSLNNYIE (84 aa)) enclose the Core-binding (CB) domain. The Tyr recombinase domain maps to 142–332 (YEKVKVTYDD…DFEEEKNQIF (191 aa)). Catalysis depends on residues Arg-180, Lys-211, His-281, and His-308. Tyr-319 (O-(3'-phospho-DNA)-tyrosine intermediate) is an active-site residue.

The protein belongs to the 'phage' integrase family.

This Bacillus subtilis (strain 168) protein is SPbeta prophage-derived recombinase-like protein YomM (yomM).